Here is a 217-residue protein sequence, read N- to C-terminus: Probable nicotinate-nucleotide adenylyltransferase (217 aa).

Belongs to the NadD family.

The enzyme catalyses nicotinate beta-D-ribonucleotide + ATP + H(+) = deamido-NAD(+) + diphosphate. It participates in cofactor biosynthesis; NAD(+) biosynthesis; deamido-NAD(+) from nicotinate D-ribonucleotide: step 1/1. Functionally, catalyzes the reversible adenylation of nicotinate mononucleotide (NaMN) to nicotinic acid adenine dinucleotide (NaAD). The polypeptide is Probable nicotinate-nucleotide adenylyltransferase (Baumannia cicadellinicola subsp. Homalodisca coagulata).